The following is a 284-amino-acid chain: MKLGDFEIGLDRPFFLIAGTCVVESEQMTIDTAGRLKEICAKLNIPFIYKSSYDKANRSSGKSFRGLGMDEGLRILSEVKRQLGLPVLTDVHAEHEIEQVASVVDVLQTPAFLCRQTDFIHACARSGKPVNIKKGQFLAPHDMKNVIDKARDAAREAGLSEDRFMACERGVSFGYNNLVSDMRSLAIMRETNAPVVFDATHSVQLPGGQGTSSGGQREFVPVLARAAVAVGVAGLFMETHPNPAQAKSDGPNAVPLHRMADLLETLVTLDRAVKRAPFLESDFN.

The protein belongs to the KdsA family.

The protein localises to the cytoplasm. The catalysed reaction is D-arabinose 5-phosphate + phosphoenolpyruvate + H2O = 3-deoxy-alpha-D-manno-2-octulosonate-8-phosphate + phosphate. It participates in carbohydrate biosynthesis; 3-deoxy-D-manno-octulosonate biosynthesis; 3-deoxy-D-manno-octulosonate from D-ribulose 5-phosphate: step 2/3. It functions in the pathway bacterial outer membrane biogenesis; lipopolysaccharide biosynthesis. The polypeptide is 2-dehydro-3-deoxyphosphooctonate aldolase (Paraburkholderia xenovorans (strain LB400)).